Reading from the N-terminus, the 204-residue chain is Urease accessory protein UreG (204 aa).

Position 11 to 18 (glycine 11 to threonine 18) interacts with GTP.

It belongs to the SIMIBI class G3E GTPase family. UreG subfamily. In terms of assembly, homodimer. UreD, UreF and UreG form a complex that acts as a GTP-hydrolysis-dependent molecular chaperone, activating the urease apoprotein by helping to assemble the nickel containing metallocenter of UreC. The UreE protein probably delivers the nickel.

It localises to the cytoplasm. Facilitates the functional incorporation of the urease nickel metallocenter. This process requires GTP hydrolysis, probably effectuated by UreG. In Staphylococcus aureus (strain bovine RF122 / ET3-1), this protein is Urease accessory protein UreG.